A 154-amino-acid polypeptide reads, in one-letter code: Ribonuclease H (154 aa).

An RNase H type-1 domain is found at 1–142 (MTKQVEIFTD…CDELAREGAN (142 aa)). Mg(2+) is bound by residues Asp-10, Glu-48, Asp-70, and Asp-134.

This sequence belongs to the RNase H family. Monomer. Mg(2+) serves as cofactor.

The protein resides in the cytoplasm. The catalysed reaction is Endonucleolytic cleavage to 5'-phosphomonoester.. Its function is as follows. Endonuclease that specifically degrades the RNA of RNA-DNA hybrids. The chain is Ribonuclease H from Yersinia enterocolitica serotype O:8 / biotype 1B (strain NCTC 13174 / 8081).